The sequence spans 185 residues: Probable nicotinate-nucleotide adenylyltransferase (185 aa).

It belongs to the NadD family.

It catalyses the reaction nicotinate beta-D-ribonucleotide + ATP + H(+) = deamido-NAD(+) + diphosphate. It participates in cofactor biosynthesis; NAD(+) biosynthesis; deamido-NAD(+) from nicotinate D-ribonucleotide: step 1/1. Catalyzes the reversible adenylation of nicotinate mononucleotide (NaMN) to nicotinic acid adenine dinucleotide (NaAD). The protein is Probable nicotinate-nucleotide adenylyltransferase of Methylorubrum extorquens (strain PA1) (Methylobacterium extorquens).